A 252-amino-acid chain; its full sequence is Triosephosphate isomerase (252 aa).

10 to 12 (NWK) provides a ligand contact to substrate. His-96 serves as the catalytic Electrophile. Glu-168 serves as the catalytic Proton acceptor. Residues Gly-174, Ser-214, and 235 to 236 (GG) each bind substrate.

The protein belongs to the triosephosphate isomerase family. In terms of assembly, homodimer.

Its subcellular location is the cytoplasm. The catalysed reaction is D-glyceraldehyde 3-phosphate = dihydroxyacetone phosphate. Its pathway is carbohydrate biosynthesis; gluconeogenesis. The protein operates within carbohydrate degradation; glycolysis; D-glyceraldehyde 3-phosphate from glycerone phosphate: step 1/1. Involved in the gluconeogenesis. Catalyzes stereospecifically the conversion of dihydroxyacetone phosphate (DHAP) to D-glyceraldehyde-3-phosphate (G3P). In Streptococcus equi subsp. zooepidemicus (strain MGCS10565), this protein is Triosephosphate isomerase.